A 352-amino-acid polypeptide reads, in one-letter code: Phospho-N-acetylmuramoyl-pentapeptide-transferase (352 aa).

10 consecutive transmembrane segments (helical) span residues 16–36, 66–86, 88–108, 129–149, 160–180, 191–211, 228–248, 255–275, 280–300, and 329–349; these read YITF…LLFM, TPTM…LLCA, LNNL…LIGL, MLYL…FGME, PLLS…VATS, GLAT…VYIA, SGEA…FLWF, LFMG…MAII, FLLF…ILQI, and KIIV…LLTL.

It belongs to the glycosyltransferase 4 family. MraY subfamily. Mg(2+) serves as cofactor.

It localises to the cell inner membrane. The enzyme catalyses UDP-N-acetyl-alpha-D-muramoyl-L-alanyl-gamma-D-glutamyl-meso-2,6-diaminopimeloyl-D-alanyl-D-alanine + di-trans,octa-cis-undecaprenyl phosphate = di-trans,octa-cis-undecaprenyl diphospho-N-acetyl-alpha-D-muramoyl-L-alanyl-D-glutamyl-meso-2,6-diaminopimeloyl-D-alanyl-D-alanine + UMP. It functions in the pathway cell wall biogenesis; peptidoglycan biosynthesis. Its function is as follows. Catalyzes the initial step of the lipid cycle reactions in the biosynthesis of the cell wall peptidoglycan: transfers peptidoglycan precursor phospho-MurNAc-pentapeptide from UDP-MurNAc-pentapeptide onto the lipid carrier undecaprenyl phosphate, yielding undecaprenyl-pyrophosphoryl-MurNAc-pentapeptide, known as lipid I. In Wolinella succinogenes (strain ATCC 29543 / DSM 1740 / CCUG 13145 / JCM 31913 / LMG 7466 / NCTC 11488 / FDC 602W) (Vibrio succinogenes), this protein is Phospho-N-acetylmuramoyl-pentapeptide-transferase.